The sequence spans 52 residues: Unknown protein from spot 415 of 2D-PAGE of etiolated coleoptile (52 aa).

The protein is Unknown protein from spot 415 of 2D-PAGE of etiolated coleoptile of Zea mays (Maize).